We begin with the raw amino-acid sequence, 301 residues long: MLTFQQIIFKLQTFWADKGCTVIQPFDMEVGAGTSHPATCLRALGPEPWFAAYVQPSRRPKDGRYGDNPNRLQHYYQFQVALKPAPANIQDLYLDSLRELGIDPKVHDIRFVEDDWENPTLGAWGLGWEVWLNGMEVTQFTYFQQVGGIDCTPVLGEITYGIERLAMYLQGVENVYDLVWAKTLDGNTVTYGDVYHQNEVEQSTYNFEYSDADWLLRQFNDYEAQAKRLLAEENAALALPAYELVLKAGHTFNLLDARGAISVTERATYIGRIRALSRAVAQKYVESREKLGFPLMKANAA.

Belongs to the class-II aminoacyl-tRNA synthetase family. Tetramer of two alpha and two beta subunits.

The protein localises to the cytoplasm. It catalyses the reaction tRNA(Gly) + glycine + ATP = glycyl-tRNA(Gly) + AMP + diphosphate. The sequence is that of Glycine--tRNA ligase alpha subunit from Neisseria meningitidis serogroup C (strain 053442).